A 258-amino-acid chain; its full sequence is Proteasome subunit alpha (258 aa).

It belongs to the peptidase T1A family. The 20S proteasome core is composed of 14 alpha and 14 beta subunits that assemble into four stacked heptameric rings, resulting in a barrel-shaped structure. The two inner rings, each composed of seven catalytic beta subunits, are sandwiched by two outer rings, each composed of seven alpha subunits. The catalytic chamber with the active sites is on the inside of the barrel. Has a gated structure, the ends of the cylinder being occluded by the N-termini of the alpha-subunits. Is capped at one or both ends by the proteasome regulatory ATPase, PAN.

Its subcellular location is the cytoplasm. With respect to regulation, the formation of the proteasomal ATPase PAN-20S proteasome complex, via the docking of the C-termini of PAN into the intersubunit pockets in the alpha-rings, triggers opening of the gate for substrate entry. Interconversion between the open-gate and close-gate conformations leads to a dynamic regulation of the 20S proteasome proteolysis activity. Component of the proteasome core, a large protease complex with broad specificity involved in protein degradation. The protein is Proteasome subunit alpha of Aeropyrum pernix (strain ATCC 700893 / DSM 11879 / JCM 9820 / NBRC 100138 / K1).